The following is a 123-amino-acid chain: Large ribosomal subunit protein bL17 (123 aa).

Belongs to the bacterial ribosomal protein bL17 family. As to quaternary structure, part of the 50S ribosomal subunit. Contacts protein L32.

The polypeptide is Large ribosomal subunit protein bL17 (Borreliella burgdorferi (strain ATCC 35210 / DSM 4680 / CIP 102532 / B31) (Borrelia burgdorferi)).